Reading from the N-terminus, the 327-residue chain is Malate dehydrogenase (327 aa).

11 to 17 (GAAGNIS) serves as a coordination point for NAD(+). The substrate site is built by R92 and R98. Residues N105, Q112, and 129-131 (VGN) each bind NAD(+). 2 residues coordinate substrate: N131 and R162. H187 acts as the Proton acceptor in catalysis. The segment at 304–327 (SQEKMKATEQELSEERDAVEHLLP) is disordered.

Belongs to the LDH/MDH superfamily. MDH type 2 family.

It catalyses the reaction (S)-malate + NAD(+) = oxaloacetate + NADH + H(+). Its function is as follows. Catalyzes the reversible oxidation of malate to oxaloacetate. In Psychrobacter sp. (strain PRwf-1), this protein is Malate dehydrogenase.